The sequence spans 284 residues: UPF0276 protein PA14_21580 (284 aa).

This sequence belongs to the UPF0276 family.

This Pseudomonas aeruginosa (strain UCBPP-PA14) protein is UPF0276 protein PA14_21580.